Here is a 249-residue protein sequence, read N- to C-terminus: ATP synthase subunits region ORF 6 (249 aa).

This is ATP synthase subunits region ORF 6 from Fuscovulum blasticum (Rhodobacter blasticus).